A 405-amino-acid chain; its full sequence is Pulcherriminic acid synthase (405 aa).

Positions 62, 229, 285, and 353 each coordinate heme.

This sequence belongs to the cytochrome P450 family. Homodimer. The cofactor is heme.

The enzyme catalyses cyclo(L-leucyl-L-leucyl) + 6 reduced [2Fe-2S]-[ferredoxin] + 3 O2 + 4 H(+) = pulcherriminic acid + 6 oxidized [2Fe-2S]-[ferredoxin] + 4 H2O. Its function is as follows. Involved in the biosynthesis of pulcherrimin, a red extracellular pigment. Catalyzes the oxidation of cyclo(L-Leu-L-Leu) (cLL) to yield pulcherriminic acid which forms pulcherrimin via a nonenzymic reaction with Fe(3+). Substrates with small alkyl groups (cAA, cLG, cLP) exhibit weaker binding to CYP134A1, but substrates with larger hydrophobic side chains bind in a similar regime to cLL. The sequence is that of Pulcherriminic acid synthase (cypX) from Bacillus subtilis (strain 168).